A 124-amino-acid polypeptide reads, in one-letter code: Translation initiation factor 5A (124 aa).

Hypusine is present on Lys-36.

This sequence belongs to the eIF-5A family.

It is found in the cytoplasm. In terms of biological role, functions by promoting the formation of the first peptide bond. This chain is Translation initiation factor 5A, found in Haloquadratum walsbyi (strain DSM 16790 / HBSQ001).